The sequence spans 363 residues: Lovastatin nonaketide synthase, enoyl reductase component lovC (363 aa).

Residues serine 51–lysine 54, serine 174–threonine 177, serine 197–asparagine 200, tyrosine 215, leucine 262–asparagine 263, threonine 280, and leucine 351–serine 352 contribute to the NADP(+) site. The interval threonine 226 to arginine 272 is lovB-binding.

It belongs to the zinc-containing alcohol dehydrogenase family. Each MAT domain from the lovB homodimer binds one lovC molecule to form the final active lovB-lovC megasynthase complex.

The enzyme catalyses holo-[lovastatin nonaketide synthase] + 9 malonyl-CoA + S-adenosyl-L-methionine + 11 NADPH + 19 H(+) = dihydromonacolin L-[lovastatin nonaketide synthase] + S-adenosyl-L-homocysteine + 9 CO2 + 11 NADP(+) + 9 CoA + 6 H2O. Its pathway is polyketide biosynthesis; lovastatin biosynthesis. Its function is as follows. Trans-enoyl reductase; part of the gene cluster that mediates the biosynthesis of lovastatin (also known as mevinolin, mevacor or monacolin K), a hypolipidemic inhibitor of (3S)-hydroxymethylglutaryl-coenzyme A (HMG-CoA) reductase (HMGR). The first step in the biosynthesis of lovastatin is the production of dihydromonacolin L acid (DML) by the lovastatin nonaketide synthase lovB and the trans-acting enoyl reductase lovC (called the lovB-lovC megasynthase complex) via condensation of one acetyl-CoA unit and 8 malonyl-CoA units. The formation of the LovB/C complex is essential for the integrity of the catalytic chamber to the complete total synthesis of DML acid. Dihydromonacolin L acid is released from lovB by the thioesterase lovG. Next, dihydromonacolin L acid is oxidized by the dihydromonacolin L monooxygenase lovA twice to form monacolin J acid. The 2-methylbutyrate moiety of lovastatin is synthesized by the lovastatin diketide synthase lovF via condensation of one acetyl-CoA unit and one malonyl-CoA unit. Finally, the covalent attachment of this moiety to monacolin J acid is catalyzed by the transesterase lovD to yield lovastatin. LovD has broad substrate specificity and can also convert monacolin J to simvastatin using alpha-dimethylbutanoyl-S-methyl-3-mercaptopropionate (DMB-S-MMP) as the thioester acyl donor, and can also catalyze the reverse reaction and function as hydrolase in vitro. LovD has much higher activity with LovF-bound 2-methylbutanoate than with free diketide substrates. The polypeptide is Lovastatin nonaketide synthase, enoyl reductase component lovC (Aspergillus terreus).